A 147-amino-acid polypeptide reads, in one-letter code: Ribonuclease 4 (147 aa).

The signal sequence occupies residues 1 to 28 (MALQRTQAFLLLLLLTLLGLGLVQPSYG). Gln29 is modified (pyrrolidone carboxylic acid). Arg35, His40, Lys68, Asn71, and Thr72 together coordinate dUMP. His40 (proton acceptor) is an active-site residue. Disulfide bonds link Cys53-Cys109, Cys67-Cys120, Cys85-Cys135, and Cys92-Cys99. The active-site Proton donor is His144. DUMP is bound at residue Phe145.

Belongs to the pancreatic ribonuclease family.

The protein localises to the secreted. In terms of biological role, cleaves preferentially after uridine bases. Has antimicrobial activity against uropathogenic E.coli (UPEC). Probably contributes to urinary tract sterility. This is Ribonuclease 4 (RNASE4) from Bos taurus (Bovine).